The primary structure comprises 150 residues: Helix-loop-helix protein hlh-12 (150 aa).

Positions 1–24 are disordered; sequence MAKKPRVTKLNTDRRSRANERERQ. Residues 11–24 show a composition bias toward basic and acidic residues; it reads NTDRRSRANERERQ. Residues 13–26 are basic motif; that stretch reads DRRSRANERERQRV. One can recognise a bHLH domain in the interval 13–65; sequence DRRSRANERERQRVSEMNGMFDVLLNLLPPSHFKTRLSRVQILREATSYIIRL. The interval 27–65 is helix-loop-helix motif; the sequence is SEMNGMFDVLLNLLPPSHFKTRLSRVQILREATSYIIRL.

As to quaternary structure, forms a heterodimer with helix-loop-helix protein hlh-2.

The protein localises to the nucleus. Functionally, transcription factor which binds the E box motif 5'-GCAGGTG-3'. Involved in migration of the gonadal leader cells; distal tip cells (DTCs) in hermaphrodites, and linker cells in males. Positively regulates expression of alpha integrin ina-1 and ADAMTS protease gon-1. The chain is Helix-loop-helix protein hlh-12 from Caenorhabditis elegans.